A 302-amino-acid polypeptide reads, in one-letter code: Sulfate adenylyltransferase subunit 2 (302 aa).

This sequence belongs to the PAPS reductase family. CysD subfamily. Heterodimer composed of CysD, the smaller subunit, and CysN.

It carries out the reaction sulfate + ATP + H(+) = adenosine 5'-phosphosulfate + diphosphate. The protein operates within sulfur metabolism; hydrogen sulfide biosynthesis; sulfite from sulfate: step 1/3. Its function is as follows. With CysN forms the ATP sulfurylase (ATPS) that catalyzes the adenylation of sulfate producing adenosine 5'-phosphosulfate (APS) and diphosphate, the first enzymatic step in sulfur assimilation pathway. APS synthesis involves the formation of a high-energy phosphoric-sulfuric acid anhydride bond driven by GTP hydrolysis by CysN coupled to ATP hydrolysis by CysD. The chain is Sulfate adenylyltransferase subunit 2 from Salmonella agona (strain SL483).